A 195-amino-acid polypeptide reads, in one-letter code: Probable nicotinate-nucleotide adenylyltransferase (195 aa).

Belongs to the NadD family.

It catalyses the reaction nicotinate beta-D-ribonucleotide + ATP + H(+) = deamido-NAD(+) + diphosphate. It functions in the pathway cofactor biosynthesis; NAD(+) biosynthesis; deamido-NAD(+) from nicotinate D-ribonucleotide: step 1/1. In terms of biological role, catalyzes the reversible adenylation of nicotinate mononucleotide (NaMN) to nicotinic acid adenine dinucleotide (NaAD). The chain is Probable nicotinate-nucleotide adenylyltransferase from Chlorobaculum tepidum (strain ATCC 49652 / DSM 12025 / NBRC 103806 / TLS) (Chlorobium tepidum).